Reading from the N-terminus, the 304-residue chain is Tyrosine recombinase XerD (304 aa).

Residues 6–91 (EPWRKTLETF…AIRSFHKFLL (86 aa)) form the Core-binding (CB) domain. The Tyr recombinase domain maps to 112 to 298 (YLPSVLTIEE…DRSFIKEVHK (187 aa)). Catalysis depends on residues R155, K179, H250, R253, and H276. Residue Y285 is the O-(3'-phospho-DNA)-tyrosine intermediate of the active site.

This sequence belongs to the 'phage' integrase family. XerD subfamily. In terms of assembly, forms a cyclic heterotetrameric complex composed of two molecules of XerC and two molecules of XerD.

The protein resides in the cytoplasm. Functionally, site-specific tyrosine recombinase, which acts by catalyzing the cutting and rejoining of the recombining DNA molecules. The XerC-XerD complex is essential to convert dimers of the bacterial chromosome into monomers to permit their segregation at cell division. It also contributes to the segregational stability of plasmids. The protein is Tyrosine recombinase XerD of Chlorobaculum tepidum (strain ATCC 49652 / DSM 12025 / NBRC 103806 / TLS) (Chlorobium tepidum).